The primary structure comprises 81 residues: Cytochrome b559 subunit alpha (81 aa).

Residues 21–35 (VIHSITIPMLFVAGW) form a helical membrane-spanning segment. Heme is bound at residue His-23.

The protein belongs to the PsbE/PsbF family. In terms of assembly, heterodimer of an alpha subunit and a beta subunit. PSII is composed of 1 copy each of membrane proteins PsbA, PsbB, PsbC, PsbD, PsbE, PsbF, PsbH, PsbI, PsbJ, PsbK, PsbL, PsbM, PsbT, PsbX, PsbY, PsbZ, Psb30/Ycf12, peripheral proteins PsbO, CyanoQ (PsbQ), PsbU, PsbV and a large number of cofactors. It forms dimeric complexes. Heme b is required as a cofactor.

It localises to the cellular thylakoid membrane. Its function is as follows. This b-type cytochrome is tightly associated with the reaction center of photosystem II (PSII). PSII is a light-driven water:plastoquinone oxidoreductase that uses light energy to abstract electrons from H(2)O, generating O(2) and a proton gradient subsequently used for ATP formation. It consists of a core antenna complex that captures photons, and an electron transfer chain that converts photonic excitation into a charge separation. This Gloeothece citriformis (strain PCC 7424) (Cyanothece sp. (strain PCC 7424)) protein is Cytochrome b559 subunit alpha.